The chain runs to 201 residues: Sorting nexin-10 (201 aa).

A required for interaction with ATP6V1D region spans residues 8–125 (EEFVSVWVRD…SLHLFLQSHL (118 aa)). One can recognise a PX domain in the interval 10 to 127 (FVSVWVRDPR…HLFLQSHLNS (118 aa)). Positions 53, 79, and 94 each coordinate a 1,2-diacyl-sn-glycero-3-phospho-(1D-myo-inositol-3-phosphate). Residues 155-201 (RFPEEEEEGKKDADVEYDSESSSSGLGHSSDDSSSHGCKTSPALQES) form a disordered region.

The protein belongs to the sorting nexin family. In terms of assembly, interacts with ATP6V1D; may play a role in ciliogenesis. In terms of tissue distribution, expressed in femur, calvariae and teeth.

Its subcellular location is the cytoplasm. It localises to the endosome membrane. It is found in the cytoskeleton. The protein resides in the microtubule organizing center. The protein localises to the centrosome. In terms of biological role, probable phosphoinositide-binding protein involved in protein sorting and membrane trafficking in endosomes. Plays a role in cilium biogenesis through regulation of the transport and the localization of proteins to the cilium. Required for the localization to the cilium of V-ATPase subunit ATP6V1D and ATP6V0D1, and RAB8A. Involved in osteoclast differentiation and therefore bone resorption. This chain is Sorting nexin-10 (Snx10), found in Mus musculus (Mouse).